The primary structure comprises 291 residues: Ribonuclease Z (291 aa).

Zn(2+)-binding residues include histidine 61, histidine 63, aspartate 65, histidine 66, histidine 133, aspartate 201, and histidine 257. The active-site Proton acceptor is aspartate 65.

The protein belongs to the RNase Z family. As to quaternary structure, homodimer. Requires Zn(2+) as cofactor.

The enzyme catalyses Endonucleolytic cleavage of RNA, removing extra 3' nucleotides from tRNA precursor, generating 3' termini of tRNAs. A 3'-hydroxy group is left at the tRNA terminus and a 5'-phosphoryl group is left at the trailer molecule.. In terms of biological role, zinc phosphodiesterase, which displays some tRNA 3'-processing endonuclease activity. Probably involved in tRNA maturation, by removing a 3'-trailer from precursor tRNA. This chain is Ribonuclease Z, found in Saccharolobus islandicus (strain M.16.27) (Sulfolobus islandicus).